Here is a 192-residue protein sequence, read N- to C-terminus: Cytidylate kinase (192 aa).

12–20 (GLAGSGTTT) is an ATP binding site.

The protein belongs to the cytidylate kinase family. Type 2 subfamily.

The protein localises to the cytoplasm. It catalyses the reaction CMP + ATP = CDP + ADP. The enzyme catalyses dCMP + ATP = dCDP + ADP. The sequence is that of Cytidylate kinase (cmk) from Pyrococcus horikoshii (strain ATCC 700860 / DSM 12428 / JCM 9974 / NBRC 100139 / OT-3).